Consider the following 547-residue polypeptide: Cdc42-interacting protein 4 (547 aa).

The interval 1–117 is required for translocation to the plasma membrane in response to insulin, podosome formation and interaction with AKAP9 and microtubules; the sequence is MDWGTELWDQ…EMKQERKMHF (117 aa). The F-BAR domain maps to 1-264; the sequence is MDWGTELWDQ…AAESVDAKND (264 aa). Residues 67-259 adopt a coiled-coil conformation; it reads FSQQQSFVQL…EGMKVAAESV (193 aa). Positions 293 to 483 are interaction with CDC42; the sequence is RVPSDSSLGT…YTEFDEDFEE (191 aa). An interaction with PDE6G region spans residues 293 to 547; that stretch reads RVPSDSSLGT…PTSYLRVTLN (255 aa). Residues 294 to 323 are disordered; it reads VPSDSSLGTPDGRPELRAASSRSRAKRWPF. Phosphoserine is present on residues Ser296, Ser298, and Ser299. Residues 332–425 are a coiled coil; sequence TEDFSHLPPE…ESRVLSNRGD (94 aa). The region spanning 337 to 414 is the REM-1 domain; it reads HLPPEQQRKR…VQKYEAWLAE (78 aa). A required for interaction with FASLG and localization to lysosomes region spans residues 415 to 547; the sequence is AESRVLSNRG…PTSYLRVTLN (133 aa). The tract at residues 420–485 is disordered; it reads LSNRGDSLSR…EFDEDFEEPA (66 aa). Position 426 is a phosphoserine (Ser426). Residues 431–487 form an interaction with DNM2 and WASL region; the sequence is TRPPDPPTTAPPDSSSSSNNSGSQDNKESSEEPPSEEGQDTPIYTEFDEDFEEPASP. The segment covering 441-451 has biased composition (low complexity); it reads PPDSSSSSNNS. Residues 476-547 form an interaction with DNM1 and WASL region; sequence EFDEDFEEPA…PTSYLRVTLN (72 aa). A required for podosome formation region spans residues 484–547; the sequence is PASPIGQCVA…PTSYLRVTLN (64 aa). The SH3 domain maps to 486-547; the sequence is SPIGQCVAIY…PTSYLRVTLN (62 aa). The interval 490–547 is interaction with WAS; sequence QCVAIYHFEGSSEGTVSMSEGEDLSLMEEDKGDGWTRVRRKQGGEGYVPTSYLRVTLN. Positions 492–547 are interaction with ARHGAP17, DAAM1, DIAPH1 and DIAPH2; sequence VAIYHFEGSSEGTVSMSEGEDLSLMEEDKGDGWTRVRRKQGGEGYVPTSYLRVTLN.

Belongs to the FNBP1 family. Homodimerizes, the dimers can polymerize end-to-end to form filamentous structures. Interacts specifically with GTP-bound CDC42 and RHOQ. Interacts with AKAP9, ARHGAP17, DAAM1, DIAPH1, DIAPH2, DNM1, DNM2, FASLG/FASL, GAPVD1, LYN, microtubules, SRC, WAS/WASP and WASL/N-WASP. Interacts with the ligand binding domain of the thyroid receptor (TR) in the presence of thyroid hormone. May interact with CTNNB1 and HD/HTT. Interacts with PDE6G. In terms of tissue distribution, expressed in adrenal gland, aorta, brain, heart, kidney, liver, skeletal muscle and spleen.

It localises to the cytoplasm. Its subcellular location is the cytoskeleton. It is found in the cell cortex. The protein localises to the lysosome. The protein resides in the golgi apparatus. It localises to the cell membrane. Its subcellular location is the cell projection. It is found in the phagocytic cup. Functionally, required to coordinate membrane tubulation with reorganization of the actin cytoskeleton during endocytosis. Also acts as a link between CDC42 signaling and regulation of the actin cytoskeleton. Binds to lipids such as phosphatidylinositol 4,5-bisphosphate and phosphatidylserine and promotes membrane invagination and the formation of tubules. Also enhances actin polymerization in the vicinity of membrane tubules by recruiting WASL/N-WASP which in turn activates the Arp2/3 complex. Actin polymerization and dynamin may promote the fission of membrane tubules to form endocytic vesicles. Required for the formation of podosomes, actin-rich adhesion structures specific to monocyte-derived cells. Required for translocation of GLUT4 to the plasma membrane in response to insulin signaling. May be required for the lysosomal retention of FASLG/FASL. The chain is Cdc42-interacting protein 4 (Trip10) from Rattus norvegicus (Rat).